The primary structure comprises 177 residues: CCHC-type zinc finger nucleic acid binding protein (177 aa).

S2 is modified (N-acetylserine). A CCHC-type 1 zinc finger spans residues 4 to 21 (NECFKCGRSGHWARECPT). At K8 the chain carries N6-acetyllysine. Residues R25 and R27 each carry the omega-N-methylarginine; by PRMT1 modification. The segment at 25-38 (RGRGMRSRGRGGFT) is RNA-binding Arg/Gly-rich region (RGG-box). Residues R32 and R34 each carry the omega-N-methylarginine modification. S49 carries the phosphoserine modification. 6 CCHC-type zinc fingers span residues 52-69 (DICY…DCDL), 72-89 (DACY…DCKE), 96-113 (QCCY…DCDH), 117-134 (QKCY…DCTK), 135-152 (VKCY…NCSK), and 156-173 (VNCY…ECTI). Omega-N-methylarginine occurs at positions 73, 79, and 80.

As to quaternary structure, associates with the 40S ribosomal subunit, the 80S ribosome and with polysomes. In terms of processing, arginine methylation by PRMT1 in the Arg/Gly-rich region impedes RNA binding. In terms of tissue distribution, expressed in the liver, kidney, spleen, testis, lung, muscle and adrenal glands.

Its subcellular location is the nucleus. It localises to the cytoplasm. The protein localises to the endoplasmic reticulum. Single-stranded DNA-binding protein that preferentially binds to the sterol regulatory element (SRE) sequence 5'-GTGCGGTG-3', and thereby mediates transcriptional repression. Has a role as transactivator of the Myc promoter. Binds single-stranded RNA in a sequence-specific manner. In terms of biological role, binds G-rich elements in target mRNA coding sequences. Prevents G-quadruplex structure formation in vitro, suggesting a role in supporting translation by resolving stable structures on mRNAs. Its function is as follows. Binds to RNA. The chain is CCHC-type zinc finger nucleic acid binding protein from Homo sapiens (Human).